We begin with the raw amino-acid sequence, 235 residues long: Serine protease SplA (235 aa).

The N-terminal stretch at 1–35 (MNKNVMVKGLTALTILTSLGFAENISNQPHSIAKA) is a signal peptide. Catalysis depends on charge relay system residues His-74, Asp-113, and Ser-189.

Belongs to the peptidase S1B family.

Its subcellular location is the secreted. This chain is Serine protease SplA (splA), found in Staphylococcus aureus (strain USA300).